Here is a 332-residue protein sequence, read N- to C-terminus: Protoheme IX farnesyltransferase (332 aa).

The next 7 membrane-spanning stretches (helical) occupy residues 63 to 83 (LICT…LNCL), 109 to 129 (TVFL…ISGV), 132 to 152 (LAAG…TIIL), 160 to 180 (IVFG…AATG), 188 to 208 (WLFG…AILL), 245 to 265 (ILGV…LLPF), and 286 to 306 (AKGL…LLLI).

It belongs to the UbiA prenyltransferase family. Protoheme IX farnesyltransferase subfamily.

The protein resides in the cell inner membrane. It carries out the reaction heme b + (2E,6E)-farnesyl diphosphate + H2O = Fe(II)-heme o + diphosphate. The protein operates within porphyrin-containing compound metabolism; heme O biosynthesis; heme O from protoheme: step 1/1. Converts heme B (protoheme IX) to heme O by substitution of the vinyl group on carbon 2 of heme B porphyrin ring with a hydroxyethyl farnesyl side group. This is Protoheme IX farnesyltransferase from Prochlorococcus marinus (strain MIT 9515).